A 119-amino-acid polypeptide reads, in one-letter code: Protein TusC (119 aa).

This sequence belongs to the DsrF/TusC family. As to quaternary structure, heterohexamer, formed by a dimer of trimers. The hexameric TusBCD complex contains 2 copies each of TusB, TusC and TusD. The TusBCD complex interacts with TusE.

The protein localises to the cytoplasm. In terms of biological role, part of a sulfur-relay system required for 2-thiolation of 5-methylaminomethyl-2-thiouridine (mnm(5)s(2)U) at tRNA wobble positions. This Buchnera aphidicola subsp. Acyrthosiphon pisum (strain APS) (Acyrthosiphon pisum symbiotic bacterium) protein is Protein TusC.